The chain runs to 184 residues: uncharacterized protein (184 aa).

A signal peptide spans 1 to 20 (MYQLEKIWVLLCLALVGVLG).

This is an uncharacterized protein from Drosophila melanogaster (Fruit fly).